The sequence spans 329 residues: Probable cell division protein WhiA (329 aa).

Positions 275 to 308 form a DNA-binding region, H-T-H motif; that stretch reads SLEELGALADPPLTKDAVAGRIRRLLAMADKRAQ.

It belongs to the WhiA family.

Its function is as follows. Involved in cell division and chromosome segregation. The protein is Probable cell division protein WhiA of Streptomyces avermitilis (strain ATCC 31267 / DSM 46492 / JCM 5070 / NBRC 14893 / NCIMB 12804 / NRRL 8165 / MA-4680).